The chain runs to 195 residues: Phenoloxidase subunit 1 (195 aa).

Residue His-10 coordinates Cu cation. Asn-77, Asn-97, and Asn-98 each carry an N-linked (GlcNAc...) asparagine glycan.

This sequence belongs to the tyrosinase family. In terms of assembly, heterodimer. It depends on Cu(2+) as a cofactor.

The protein resides in the secreted. It catalyses the reaction 2 L-dopa + O2 = 2 L-dopaquinone + 2 H2O. The enzyme catalyses L-tyrosine + O2 = L-dopaquinone + H2O. Its function is as follows. This is a copper-containing oxidase that functions in the formation of pigments such as melanins and other polyphenolic compounds. Catalyzes the rate-limiting conversions of tyrosine to DOPA, DOPA to DOPA-quinone and possibly 5,6 dihydroxyindole to indole-5'6 quinone. This Simulium damnosum (Black fly) protein is Phenoloxidase subunit 1.